Reading from the N-terminus, the 525-residue chain is GMP synthase [glutamine-hydrolyzing] (525 aa).

The region spanning 9–207 is the Glutamine amidotransferase type-1 domain; that stretch reads RVLILDFGSQ…VLEIAGCEPL (199 aa). The active-site Nucleophile is the Cys86. Active-site residues include His181 and Glu183. The 193-residue stretch at 208-400 folds into the GMPS ATP-PPase domain; that stretch reads WTPANIVEDA…LGLPYDMVYR (193 aa). 235-241 contacts ATP; it reads SGGVDSS.

Homodimer.

The enzyme catalyses XMP + L-glutamine + ATP + H2O = GMP + L-glutamate + AMP + diphosphate + 2 H(+). Its pathway is purine metabolism; GMP biosynthesis; GMP from XMP (L-Gln route): step 1/1. Catalyzes the synthesis of GMP from XMP. The polypeptide is GMP synthase [glutamine-hydrolyzing] (Teredinibacter turnerae (strain ATCC 39867 / T7901)).